We begin with the raw amino-acid sequence, 226 residues long: UPF0758 protein SAK_1186 (226 aa).

In terms of domain architecture, MPN spans 103–225; it reads QILSSEQLAR…YYSFREEADI (123 aa). Zn(2+) is bound by residues His-174, His-176, and Asp-187. Positions 174–187 match the JAMM motif motif; the sequence is HNHPSGSPKPSESD.

Belongs to the UPF0758 family.

The protein is UPF0758 protein SAK_1186 of Streptococcus agalactiae serotype Ia (strain ATCC 27591 / A909 / CDC SS700).